Consider the following 341-residue polypeptide: Limbic system-associated membrane protein (341 aa).

An N-terminal signal peptide occupies residues methionine 1–proline 28. Ig-like domains are found at residues valine 29 to serine 122, proline 132 to threonine 214, and proline 219 to valine 304. N-linked (GlcNAc...) asparagine glycans are attached at residues asparagine 40 and asparagine 66. Cysteine 53 and cysteine 111 are joined by a disulfide. Tyrosine 94 is subject to Phosphotyrosine. Residues asparagine 136 and asparagine 148 are each glycosylated (N-linked (GlcNAc...) asparagine). 2 disulfides stabilise this stretch: cysteine 153/cysteine 197 and cysteine 239/cysteine 290. N-linked (GlcNAc...) asparagine glycosylation is found at asparagine 279, asparagine 287, and asparagine 300.

It belongs to the immunoglobulin superfamily. IgLON family.

It is found in the cell membrane. In terms of biological role, mediates selective neuronal growth and axon targeting. Contributes to the guidance of developing axons and remodeling of mature circuits in the limbic system. Essential for normal growth of the hippocampal mossy fiber projection. This is Limbic system-associated membrane protein (Lsamp) from Mus musculus (Mouse).